Here is a 504-residue protein sequence, read N- to C-terminus: Probable cytochrome P450 6a21 (504 aa).

C449 contributes to the heme binding site.

This sequence belongs to the cytochrome P450 family. Heme serves as cofactor.

The protein localises to the endoplasmic reticulum membrane. It is found in the microsome membrane. In terms of biological role, may be involved in the metabolism of insect hormones and in the breakdown of synthetic insecticides. This is Probable cytochrome P450 6a21 (Cyp6a21) from Drosophila melanogaster (Fruit fly).